Here is a 222-residue protein sequence, read N- to C-terminus: N-(5'-phosphoribosyl)anthranilate isomerase (222 aa).

This sequence belongs to the TrpF family.

The catalysed reaction is N-(5-phospho-beta-D-ribosyl)anthranilate = 1-(2-carboxyphenylamino)-1-deoxy-D-ribulose 5-phosphate. The protein operates within amino-acid biosynthesis; L-tryptophan biosynthesis; L-tryptophan from chorismate: step 3/5. The polypeptide is N-(5'-phosphoribosyl)anthranilate isomerase (Symbiobacterium thermophilum (strain DSM 24528 / JCM 14929 / IAM 14863 / T)).